The sequence spans 278 residues: Small ribosomal subunit protein uS2 (278 aa).

At serine 2 the chain carries N-acetylserine. The segment at 258–278 (TNEGKTAADEWATGAQTQSNW) is disordered.

This sequence belongs to the universal ribosomal protein uS2 family. As to quaternary structure, component of the small ribosomal subunit. Mature ribosomes consist of a small (40S) and a large (60S) subunit. The 40S subunit contains about 33 different proteins and 1 molecule of RNA (18S). The 60S subunit contains about 49 different proteins and 3 molecules of RNA (28S, 5.8S and 5S). Interacts with rps-21.

It localises to the cytoplasm. Its function is as follows. Required for the assembly and/or stability of the 40S ribosomal subunit. Required for the processing of the 20S rRNA-precursor to mature 18S rRNA in a late step of the maturation of 40S ribosomal subunits. The sequence is that of Small ribosomal subunit protein uS2 from Caenorhabditis briggsae.